The primary structure comprises 425 residues: Tol-Pal system protein TolB (425 aa).

An N-terminal signal peptide occupies residues 1-25 (MTRKHILSFALMTALGMTVTSTAFA).

This sequence belongs to the TolB family. The Tol-Pal system is composed of five core proteins: the inner membrane proteins TolA, TolQ and TolR, the periplasmic protein TolB and the outer membrane protein Pal. They form a network linking the inner and outer membranes and the peptidoglycan layer.

Its subcellular location is the periplasm. Its function is as follows. Part of the Tol-Pal system, which plays a role in outer membrane invagination during cell division and is important for maintaining outer membrane integrity. This is Tol-Pal system protein TolB from Acinetobacter baylyi (strain ATCC 33305 / BD413 / ADP1).